The chain runs to 238 residues: Cysteine-rich venom protein pseudechetoxin-like (238 aa).

An N-terminal signal peptide occupies residues 1 to 19; the sequence is MIAFIVLLSLAAVLQQSSG. The propeptide occupies 20–28; the sequence is TVDFASESS. The SCP domain maps to 38–164; it reads VDKHNALRRS…STKYLYVCQY (127 aa). Disulfide bonds link Cys-75-Cys-153, Cys-92-Cys-165, Cys-148-Cys-162, Cys-184-Cys-191, Cys-187-Cys-196, Cys-200-Cys-233, Cys-209-Cys-227, and Cys-218-Cys-231. A ShKT domain is found at 200-233; that stretch reads CKYEDDFSNCKALAKNSKCQTEWIKSKCPAACFC.

Belongs to the CRISP family. In terms of tissue distribution, expressed by the venom gland.

The protein resides in the secreted. Blocks olfactory (CNGA2) and retinal (CNGA1) CNG channel currents. Does not affect neither depolarization- nor caffeine-induced contraction of smooth muscle. The protein is Cysteine-rich venom protein pseudechetoxin-like of Notechis scutatus scutatus (Mainland tiger snake).